Reading from the N-terminus, the 312-residue chain is MAKMKCAIIGSGNIGTDLMIKLLKGSDTLELAAVVGIDPASEGLAMASERGVPTTHEGIEGLCRMPQYADIGIAFDATSAYAHKAHDEILARDGKLMVDLTPAAIGPATIPPVNPAVDAAVRNINMVTCGGQATIPIVAAVSQVAKVHYAEIVASVSSRSAGPGTRANIDEFTRTTARAIETVGGAAKGRAVIILNPAEPPMIMRDTIFTLSEMVDEDKVRDSVLAMIARVQSYVPGYRLKQEVQFERFGSNRPLKIPGYGEFEGLKTSVFLEVEGAGDYLPNYSGNLDIMTAAAKAAGESLAKTHMEKTAA.

11–14 (SGNI) contributes to the NAD(+) binding site. C129 acts as the Acyl-thioester intermediate in catalysis. NAD(+) is bound by residues 160–168 (SAGPGTRAN) and N287.

This sequence belongs to the acetaldehyde dehydrogenase family.

It catalyses the reaction acetaldehyde + NAD(+) + CoA = acetyl-CoA + NADH + H(+). In Novosphingobium aromaticivorans (strain ATCC 700278 / DSM 12444 / CCUG 56034 / CIP 105152 / NBRC 16084 / F199), this protein is Acetaldehyde dehydrogenase 2.